The following is a 412-amino-acid chain: Putative competence-damage inducible protein (412 aa).

The protein belongs to the CinA family.

In Bacillus cereus (strain ZK / E33L), this protein is Putative competence-damage inducible protein.